The chain runs to 505 residues: Tyrosine-protein kinase Blk (505 aa).

A disordered region spans residues 1–37 (MGLVSSKKPDKEKPIKEKDKGQWSPLKVSAQDKDAPP). Gly-2 is lipidated: N-myristoyl glycine. Residues 7-21 (KKPDKEKPIKEKDKG) are compositionally biased toward basic and acidic residues. The 61-residue stretch at 58–118 (EDKHFVVALY…PSNFVARVES (61 aa)) folds into the SH3 domain. The SH2 domain occupies 124-220 (WFFRSQGRKE…GLCQRLTLPC (97 aa)). The region spanning 241–494 (LRLVRKLGSG…FLQSVLEDFY (254 aa)) is the Protein kinase domain. Residues 247 to 255 (LGSGQFGEV) and Lys-269 contribute to the ATP site. Asp-360 (proton acceptor) is an active-site residue. The residue at position 389 (Tyr-389) is a Phosphotyrosine; by autocatalysis.

This sequence belongs to the protein kinase superfamily. Tyr protein kinase family. SRC subfamily. Interacts with CBL (via SH2 domain). Interacts with CD79A and CD79B (via SH2 domain). Post-translationally, phosphorylated on tyrosine residues after antibody-mediated surface engagement of the B-cell antigen receptor (BCR). Ubiquitination of activated BLK by the UBE3A ubiquitin protein ligase leads to its degradation by the ubiquitin-proteasome pathway. In terms of tissue distribution, expressed in lymphatic organs, pancreatic islets, Leydig cells, striate ducts of salivary glands and hair follicles.

The protein resides in the cell membrane. It catalyses the reaction L-tyrosyl-[protein] + ATP = O-phospho-L-tyrosyl-[protein] + ADP + H(+). Antibody-mediated surface engagement of the B-cell antigen receptor (BCR) which results in the phosphorylation of BLK on tyrosine residues, stimulates the enzymatic activity. Non-receptor tyrosine kinase involved in B-lymphocyte development, differentiation and signaling. B-cell receptor (BCR) signaling requires a tight regulation of several protein tyrosine kinases and phosphatases, and associated coreceptors. Binding of antigen to the B-cell antigen receptor (BCR) triggers signaling that ultimately leads to B-cell activation. Signaling through BLK plays an important role in transmitting signals through surface immunoglobulins and supports the pro-B to pre-B transition, as well as the signaling for growth arrest and apoptosis downstream of B-cell receptor. Specifically binds and phosphorylates CD79A at 'Tyr-188'and 'Tyr-199', as well as CD79B at 'Tyr-196' and 'Tyr-207'. Also phosphorylates the immunoglobulin G receptors FCGR2A, FCGR2B and FCGR2C. With FYN and LYN, plays an essential role in pre-B-cell receptor (pre-BCR)-mediated NF-kappa-B activation. Also contributes to BTK activation by indirectly stimulating BTK intramolecular autophosphorylation. In pancreatic islets, acts as a modulator of beta-cells function through the up-regulation of PDX1 and NKX6-1 and consequent stimulation of insulin secretion in response to glucose. Phosphorylates CGAS, promoting retention of CGAS in the cytosol. In Homo sapiens (Human), this protein is Tyrosine-protein kinase Blk (BLK).